Here is a 263-residue protein sequence, read N- to C-terminus: MARGPKKHLKRVAAPKHWMLDKLTGVFAPRPSTGPHKLRECLPLIVFLRNRLKYALTGDEVKKICMQRFIKIDGKVRVDITYPAGFMDVISIEKTGEHFRLVYDTKGRFAVHRITVEEAKYKLCKVRKITVGTKGIPHLVTHDARTIRYPDPLIKVNDTVQIDLGTGKITSFIKFDTGNVCMVIGGANLGRVGVVTNRERHPGSCDVVHVKDANGNSFATRISNIFVIGNGNKPWISLPRGKGIRLTIAEERDKRLAAKQSSG.

Positions 42 to 104 (LPLIVFLRNR…TGEHFRLVYD (63 aa)) constitute an S4 RNA-binding domain.

It belongs to the eukaryotic ribosomal protein eS4 family.

The sequence is that of Small ribosomal subunit protein eS4, Y isoform 2 (RPS4Y2) from Pan troglodytes (Chimpanzee).